An 859-amino-acid polypeptide reads, in one-letter code: Linoleate 9S-lipoxygenase 1 (859 aa).

One can recognise a PLAT domain in the interval 21–161 (VKGTVVLMKK…HYTTDRVFFS (141 aa)). Positions 164 to 859 (TYLPHETPAT…GRGIPNSVSI (696 aa)) constitute a Lipoxygenase domain. A disordered region spans residues 213 to 246 (KNPRPVLGGTQEYPYPRRGRTGRKPTKEDPQTES). Residues H519, H524, H711, N715, and I859 each contribute to the Fe cation site.

It belongs to the lipoxygenase family. As to quaternary structure, monomer. It depends on Fe cation as a cofactor. As to expression, seedlings, roots, leaves, and flowers (at protein level). Expressed in guard cells.

It is found in the cytoplasm. The catalysed reaction is (9Z,12Z)-octadecadienoate + O2 = (9S)-hydroperoxy-(10E,12Z)-octadecadienoate. It carries out the reaction (9Z,12Z,15Z)-octadecatrienoate + O2 = (9S)-hydroperoxy-(10E,12Z,15Z)-octadecatrienoate. The protein operates within lipid metabolism; oxylipin biosynthesis. In terms of biological role, 9S-lipoxygenase that can use linoleic acid or linolenic acid as substrates. Plant lipoxygenases may be involved in a number of diverse aspects of plant physiology including growth and development, pest resistance, and senescence or responses to wounding. Catalyzes the hydroperoxidation of lipids containing a cis,cis-1,4-pentadiene structure. Function as regulators of root development by controlling the emergence of lateral roots. 9S-lypoxygenase-derived oxylipins may play an antagonistic role to ethylene signaling in the control of responses involving oxidative stress, lipid peroxidation and plant defense. LOX1-derived oxylipins may be involved in stress signaling from roots to shoots in response to cadmium exposure. 9S-lypoxygenase-derived oxylipins are engaged during infection to control the balance between salicylic acid (SA) and jasmonate (JA) signaling to facilitate infection by the fungal pathogen Fusarium graminearum. 9S-lypoxygenase-derived oxylipins activate brassinosteroid signaling to promote cell wall-based defense and limit pathogen infection. The LOX1-derived compound (9S)-hydroperoxy-(10E,12Z,15Z)-octadecatrienoate protects plant tissues against infection by the bacterial pathogen Pseudomonas syringae pv tomato DC3000. The LOX1-derived oxylipins are required to trigger stomatal closure in response to both infection by the bacterial pathogen Pseudomonas syringae pv tomato DC3000, and the pathogen-associated molecular pattern (PAMP) flagellin peptide flg22. Contributes to the oxidation of free fatty acids during seed aging. The protein is Linoleate 9S-lipoxygenase 1 of Arabidopsis thaliana (Mouse-ear cress).